The following is a 48-amino-acid chain: uncharacterized protein (48 aa).

Its subcellular location is the mitochondrion. This is an uncharacterized protein from Emericella nidulans (Aspergillus nidulans).